The chain runs to 225 residues: Probable CDP-diacylglycerol--inositol 3-phosphatidyltransferase 2 (225 aa).

The next 2 helical transmembrane spans lie at Pro-6 to Leu-26 and Ile-29 to Phe-49. 2 residues coordinate Mg(2+): Asp-52 and Asp-55. The a CDP-1,2-diacyl-sn-glycerol site is built by Gly-56, Arg-60, and Ser-66. Mg(2+) is bound by residues Asp-73 and Asp-77. Asp-77 serves as the catalytic Proton acceptor. The next 3 helical transmembrane spans lie at Leu-84–Leu-104, Met-143–Ala-163, and Leu-184–Ile-204.

Belongs to the CDP-alcohol phosphatidyltransferase class-I family. Mg(2+) serves as cofactor. Requires Mn(2+) as cofactor.

It is found in the membrane. The enzyme catalyses a CDP-1,2-diacyl-sn-glycerol + myo-inositol = a 1,2-diacyl-sn-glycero-3-phospho-(1D-myo-inositol) + CMP + H(+). Catalyzes the biosynthesis of phosphatidylinositol (PtdIns) as well as PtdIns:inositol exchange reaction. May thus act to reduce an excessive cellular PtdIns content. The exchange activity is due to the reverse reaction of PtdIns synthase and is dependent on CMP, which is tightly bound to the enzyme. This chain is Probable CDP-diacylglycerol--inositol 3-phosphatidyltransferase 2 (PIS2), found in Arabidopsis thaliana (Mouse-ear cress).